The chain runs to 21 residues: Alpha-fibrinogenase A1 (21 aa).

It belongs to the peptidase S1 family. Snake venom subfamily. In terms of assembly, monomer. Expressed by the venom gland.

The protein localises to the secreted. With respect to regulation, inhibited by PMSF, bovine aprotinin (APR), and soybean trypsin inhibitor (STI). Is not inhibited by EDTA, beta-mercaptoethanol, and high temperature (85 degrees Celsius). Snake venom serine protease that completely cleaves fibrinogen Aalpha chain (FGA), partially cleaves Bbeta chain (FGB) and has no activity on gamma chain. Is more potent that A2 and A3 alpha-fibrinogenases. Very active within 5 minutes. The polypeptide is Alpha-fibrinogenase A1 (Crotalus atrox (Western diamondback rattlesnake)).